Here is a 178-residue protein sequence, read N- to C-terminus: MAELKTVARPYAKAVFEVAREQGHIVEWADMLNVLASVTVEPKLKKALGNPAFSAEEKANALADVCAEVTTEQGKAFLLALAVNKRLSLLPAISELFLQFKLNFEKAVNVQFTSAFELTAEQTQALAASLAKKLDRTVNLTSETDASLIGGVVIRTGDLIIDGSVRGKLAKLAEAINS.

The protein belongs to the ATPase delta chain family. F-type ATPases have 2 components, F(1) - the catalytic core - and F(0) - the membrane proton channel. F(1) has five subunits: alpha(3), beta(3), gamma(1), delta(1), epsilon(1). F(0) has three main subunits: a(1), b(2) and c(10-14). The alpha and beta chains form an alternating ring which encloses part of the gamma chain. F(1) is attached to F(0) by a central stalk formed by the gamma and epsilon chains, while a peripheral stalk is formed by the delta and b chains.

The protein resides in the cell inner membrane. In terms of biological role, f(1)F(0) ATP synthase produces ATP from ADP in the presence of a proton or sodium gradient. F-type ATPases consist of two structural domains, F(1) containing the extramembraneous catalytic core and F(0) containing the membrane proton channel, linked together by a central stalk and a peripheral stalk. During catalysis, ATP synthesis in the catalytic domain of F(1) is coupled via a rotary mechanism of the central stalk subunits to proton translocation. This protein is part of the stalk that links CF(0) to CF(1). It either transmits conformational changes from CF(0) to CF(1) or is implicated in proton conduction. This is ATP synthase subunit delta from Marinomonas sp. (strain MWYL1).